Here is a 700-residue protein sequence, read N- to C-terminus: MTAVSANGKTTEKHENGAHTNGTTNGTTNGSMNGNEISHVQKLQPVYYKPPQNLETFELSLRNHFEEKTNKKFADYREFHRFTCDNYGIFWEDLLKLSDVKLHQNYNQVIDHNLKINERPRWFNGATLNYTENVIERGTATDIAVLNASIEETVTEYTYDNLRKDVYRIATSLRNYGIGPGDTVCGFVPNTYDTLVAVFATAAVGAAWCSASVDFGPAGVLDRFRQVHPKVLFTVNHVTYKKKLIDQTDKINEIVKELPTLEKIVVSDTFTSVKFDATKYNQSDKFSSLEEFKTPIADVVLPFVYTPVPFSDPLFVMFSSGTTGIPKAMVHTVGGTLLKHIEEHLVQGDSKKHDRMFFYTTCGWMMYNWMISFLYSKGSVVLFDECPLAPDTHIIMKIAAKTQSTMIGMGAKLYDEYLRLQIPFNTLYDLSKIHTVYSTGSPLKKECFAYINTYIAPGALIASISGGTDIIGCFVGGIKSLSITPGECQCLFLGMDIKSFNYMDEEIINSDEQGELVCVTPFPSMPSHFLNDTDGKKYRDAYFARLEPFWAHGDFVRVNHSTGGVEMLGRSDATLNRGGVRIGTAEIYSVVEKIPHIADCIVAGRLVEEGMDEEVLLFVKMVPGQELTHSIQAAIVSKLRNDMSPRHVPNKIYAVDDIPYTSSGKKVEVAVKQIVSGKAVQKASSIRNPESLDHFVQYRL.

Residues Met1–Asn35 are disordered. The span at Ala18–Asn35 shows a compositional bias: low complexity.

Belongs to the ATP-dependent AMP-binding enzyme family. In terms of tissue distribution, present in most cells of the organism.

It localises to the cytoplasm. The protein resides in the nucleus. The catalysed reaction is acetoacetate + ATP + CoA = acetoacetyl-CoA + AMP + diphosphate. Functionally, activates acetoacetate to acetoacetyl-CoA. Negatively regulates let-60 Ras activity during vulval induction. The sequence is that of Acetoacetyl-CoA synthetase (sur-5) from Caenorhabditis elegans.